The primary structure comprises 437 residues: 3-ketoacyl-CoA thiolase (437 aa).

Cys99 functions as the Acyl-thioester intermediate in the catalytic mechanism. Catalysis depends on proton acceptor residues His392 and Cys422.

This sequence belongs to the thiolase-like superfamily. Thiolase family. Heterotetramer of two alpha chains (FadJ) and two beta chains (FadI).

The protein resides in the cytoplasm. It carries out the reaction an acyl-CoA + acetyl-CoA = a 3-oxoacyl-CoA + CoA. The protein operates within lipid metabolism; fatty acid beta-oxidation. In terms of biological role, catalyzes the final step of fatty acid oxidation in which acetyl-CoA is released and the CoA ester of a fatty acid two carbons shorter is formed. The protein is 3-ketoacyl-CoA thiolase of Pectobacterium carotovorum subsp. carotovorum (strain PC1).